The chain runs to 612 residues: Isocitrate dehydrogenase kinase/phosphatase (612 aa).

ATP-binding positions include 327–333 (APGIKGL) and lysine 348. Aspartate 383 is an active-site residue. The tract at residues 593–612 (AGRASPEPDAPADARSVRVA) is disordered.

The protein belongs to the AceK family.

Its subcellular location is the cytoplasm. It carries out the reaction L-seryl-[isocitrate dehydrogenase] + ATP = O-phospho-L-seryl-[isocitrate dehydrogenase] + ADP + H(+). Bifunctional enzyme which can phosphorylate or dephosphorylate isocitrate dehydrogenase (IDH) on a specific serine residue. This is a regulatory mechanism which enables bacteria to bypass the Krebs cycle via the glyoxylate shunt in response to the source of carbon. When bacteria are grown on glucose, IDH is fully active and unphosphorylated, but when grown on acetate or ethanol, the activity of IDH declines drastically concomitant with its phosphorylation. The sequence is that of Isocitrate dehydrogenase kinase/phosphatase from Paraburkholderia phytofirmans (strain DSM 17436 / LMG 22146 / PsJN) (Burkholderia phytofirmans).